The following is a 347-amino-acid chain: UPF0284 protein M164_0030 (347 aa).

The protein belongs to the UPF0284 family.

In Saccharolobus islandicus (strain M.16.4 / Kamchatka #3) (Sulfolobus islandicus), this protein is UPF0284 protein M164_0030.